A 479-amino-acid polypeptide reads, in one-letter code: PTS system glucose-specific EIICB component (479 aa).

The 388-residue stretch at methionine 1–lysine 388 folds into the PTS EIIC type-1 domain. Transmembrane regions (helical) follow at residues serine 15–alanine 35, alanine 51–phenylalanine 71, leucine 80–phenylalanine 100, tyrosine 112–phenylalanine 132, phenylalanine 152–tryptophan 172, glycine 252–alanine 272, isoleucine 280–isoleucine 300, isoleucine 305–isoleucine 325, and leucine 356–isoleucine 376. The region spanning lysine 399–glutamine 479 is the PTS EIIB type-1 domain. The Phosphocysteine intermediate; for EIIB activity role is filled by cysteine 421. Cysteine 421 is modified (phosphocysteine).

Its subcellular location is the cell inner membrane. It catalyses the reaction N(pros)-phospho-L-histidyl-[protein] + D-glucose(out) = D-glucose 6-phosphate(in) + L-histidyl-[protein]. Its function is as follows. The phosphoenolpyruvate-dependent sugar phosphotransferase system (sugar PTS), a major carbohydrate active transport system, catalyzes the phosphorylation of incoming sugar substrates concomitantly with their translocation across the cell membrane. The enzyme II complex composed of PtsG and Crr is involved in glucose transport. The protein is PTS system glucose-specific EIICB component (ptsG) of Buchnera aphidicola subsp. Baizongia pistaciae (strain Bp).